We begin with the raw amino-acid sequence, 513 residues long: GMP synthase [glutamine-hydrolyzing] (513 aa).

Positions S3–D200 constitute a Glutamine amidotransferase type-1 domain. Catalysis depends on C80, which acts as the Nucleophile. Residues H174 and E176 contribute to the active site. The region spanning W201–R388 is the GMPS ATP-PPase domain. S228 to S234 contacts ATP.

Homodimer.

The enzyme catalyses XMP + L-glutamine + ATP + H2O = GMP + L-glutamate + AMP + diphosphate + 2 H(+). It functions in the pathway purine metabolism; GMP biosynthesis; GMP from XMP (L-Gln route): step 1/1. Functionally, catalyzes the synthesis of GMP from XMP. In Chlorobium limicola (strain DSM 245 / NBRC 103803 / 6330), this protein is GMP synthase [glutamine-hydrolyzing].